The following is a 136-amino-acid chain: Nucleoside diphosphate kinase (136 aa).

Residues Lys10, Phe58, Arg86, Thr92, Arg104, and Asn114 each contribute to the ATP site. His117 acts as the Pros-phosphohistidine intermediate in catalysis.

This sequence belongs to the NDK family. Homotetramer. Mg(2+) is required as a cofactor.

Its subcellular location is the cytoplasm. The enzyme catalyses a 2'-deoxyribonucleoside 5'-diphosphate + ATP = a 2'-deoxyribonucleoside 5'-triphosphate + ADP. It catalyses the reaction a ribonucleoside 5'-diphosphate + ATP = a ribonucleoside 5'-triphosphate + ADP. Major role in the synthesis of nucleoside triphosphates other than ATP. The ATP gamma phosphate is transferred to the NDP beta phosphate via a ping-pong mechanism, using a phosphorylated active-site intermediate. The sequence is that of Nucleoside diphosphate kinase from Mycolicibacterium gilvum (strain PYR-GCK) (Mycobacterium gilvum (strain PYR-GCK)).